The following is a 962-amino-acid chain: Exportin-T (962 aa).

Residue methionine 1 is modified to N-acetylmethionine. Lysine 634 is subject to N6-acetyllysine.

As to quaternary structure, found in a complex with XPOT, Ran and tRNA. Probably found in a complex with nucleoporins. Interacts with Ran and tRNA in a GTP-dependent manner.

Its subcellular location is the nucleus. The protein resides in the cytoplasm. Functionally, mediates the nuclear export of aminoacylated tRNAs. In the nucleus binds to tRNA and to the GTPase Ran in its active GTP-bound form. Docking of this trimeric complex to the nuclear pore complex (NPC) is mediated through binding to nucleoporins. Upon transit of a nuclear export complex into the cytoplasm, disassembling of the complex and hydrolysis of Ran-GTP to Ran-GDP (induced by RANBP1 and RANGAP1, respectively) cause release of the tRNA from the export receptor. XPOT then return to the nuclear compartment and mediate another round of transport. The directionality of nuclear export is thought to be conferred by an asymmetric distribution of the GTP- and GDP-bound forms of Ran between the cytoplasm and nucleus. The protein is Exportin-T (XPOT) of Pongo abelii (Sumatran orangutan).